The following is a 302-amino-acid chain: Deubiquitinase OTUD6B (302 aa).

Residues 1 to 10 are compositionally biased toward acidic residues; sequence MEGSEDEEAE. Disordered stretches follow at residues 1-52 and 99-121; these read MEGS…KQLA and EQQI…AALE. The segment covering 106–116 has biased composition (basic residues); that stretch reads RISKAQKRREK. In terms of domain architecture, OTU spans 156-293; the sequence is LEIKQIPSDG…GEHYNSVKLL (138 aa). The interval 161 to 167 is cys-loop; the sequence is IPSDGHC. Residue Asp164 is part of the active site. The active-site Nucleophile is the Cys167. Residues 228-238 are variable-loop; the sequence is IANTAAWGGQL. Residues 276–286 form a his-loop region; the sequence is YMRHAYGLGEH. His286 is an active-site residue.

It catalyses the reaction Thiol-dependent hydrolysis of ester, thioester, amide, peptide and isopeptide bonds formed by the C-terminal Gly of ubiquitin (a 76-residue protein attached to proteins as an intracellular targeting signal).. Its function is as follows. Deubiquitinating enzyme that may play a role in the ubiquitin-dependent regulation of different cellular processes. This is Deubiquitinase OTUD6B (OTUD6B) from Gallus gallus (Chicken).